A 207-amino-acid chain; its full sequence is Cyclin-dependent kinase 2-interacting protein (207 aa).

A coiled-coil region spans residues 78–99 (TDKVELDRLCSELLQTIENMEK).

The protein belongs to the CINP family. In terms of assembly, homodimer. Part of the 55LCC heterohexameric ATPase complex.

Its subcellular location is the nucleus. Component of the DNA replication complex, which interacts with two kinases, CDK2 and CDC7, thereby providing a functional and physical link between CDK2 and CDC7 during firing of the origins of replication. Regulates ATR-mediated checkpoint signaling in response to DNA damage. Part of the 55LCC heterohexameric ATPase complex which is chromatin-associated and promotes replisome proteostasis to maintain replication fork progression and genome stability. Required for replication fork progression, sister chromatid cohesion, and chromosome stability. The ATPase activity is specifically enhanced by replication fork DNA and is coupled to cysteine protease-dependent cleavage of replisome substrates in response to replication fork damage. Uses ATPase activity to process replisome substrates in S-phase, facilitating their proteolytic turnover from chromatin to ensure DNA replication and mitotic fidelity. As part of 55LCC complex, also involved in the cytoplasmic maturation steps of pre-60S ribosomal particles by promoting the release of shuttling protein RSL24D1/RLP24 from the pre-ribosomal particles. This is Cyclin-dependent kinase 2-interacting protein (cinp) from Xenopus laevis (African clawed frog).